A 427-amino-acid chain; its full sequence is Indole diterpene prenyltransferase penD (427 aa).

77-78 contributes to the L-tryptophan binding site; it reads YV. The substrate site is built by arginine 99, lysine 186, tyrosine 188, arginine 259, lysine 261, tyrosine 263, tyrosine 344, tyrosine 409, and tyrosine 413.

The protein belongs to the tryptophan dimethylallyltransferase family.

It functions in the pathway secondary metabolite biosynthesis. Functionally, indole diterpene prenyltransferase; part of the gene cluster that mediates the biosynthesis of the indole diterpenes penitrems. The geranylgeranyl diphosphate (GGPP) synthase penG catalyzes the first step in penitrem biosynthesis via conversion of farnesyl pyrophosphate and isopentyl pyrophosphate into geranylgeranyl pyrophosphate (GGPP). Condensation of indole-3-glycerol phosphate with GGPP by the prenyl transferase penC then forms 3-geranylgeranylindole (3-GGI). Epoxidation by the FAD-dependent monooxygenase penM leads to a epoxidized-GGI that is substrate of the terpene cyclase penB for cyclization to yield paspaline. Paspaline is subsequently converted to 13-desoxypaxilline by the cytochrome P450 monooxygenase penP, the latter being then converted to paxilline by the cytochrome P450 monooxygenase penQ. Paxilline is converted to beta-paxitriol via C-10 ketoreduction by the short-chain dehydrogenase PC-15 which can be monoprenylated at the C-20 by the indole diterpene prenyltransferase penD. A two-step elimination (acetylation and elimination) process performed by the O-acetyltransferase PC-16 and the P.simplicissimum ptmI-ortholog not yet identified in P.crustosum, leads to the production of the prenylated form of penijanthine. The FAD-linked oxidoreductase ptmO then converts the prenylated form of penijanthine into PC-M5 which is in turn transformed into PC-M4 by the aromatic dimethylallyltransferase PC-22. A series of oxidation steps involving 4 cytochrome P450 monooxygenases (PC-21, PC-05, PC-23, PC-20) and a FAD-dependent monooxygenase (PC-14) are required for the transformation of PC-M4 to penitrems A and E. Synthesis of these final products is proposed to proceed via penitrems D and C (PC-21, PC-05, PC-14) and penitrems B and F (PC-21, PC-05, PC-14, PC-23). The protein is Indole diterpene prenyltransferase penD of Penicillium crustosum (Blue mold fungus).